Reading from the N-terminus, the 120-residue chain is Aspartate 1-decarboxylase (120 aa).

Catalysis depends on Ser-25, which acts as the Schiff-base intermediate with substrate; via pyruvic acid. Ser-25 bears the Pyruvic acid (Ser) mark. Thr-57 contacts substrate. Tyr-58 (proton donor) is an active-site residue. 73–75 (GAA) is a substrate binding site.

Belongs to the PanD family. In terms of assembly, heterooctamer of four alpha and four beta subunits. Requires pyruvate as cofactor. Is synthesized initially as an inactive proenzyme, which is activated by self-cleavage at a specific serine bond to produce a beta-subunit with a hydroxyl group at its C-terminus and an alpha-subunit with a pyruvoyl group at its N-terminus.

It localises to the cytoplasm. It catalyses the reaction L-aspartate + H(+) = beta-alanine + CO2. Its pathway is cofactor biosynthesis; (R)-pantothenate biosynthesis; beta-alanine from L-aspartate: step 1/1. Functionally, catalyzes the pyruvoyl-dependent decarboxylation of aspartate to produce beta-alanine. The polypeptide is Aspartate 1-decarboxylase (Thermosipho africanus (strain TCF52B)).